We begin with the raw amino-acid sequence, 130 residues long: Protein LLP homolog (130 aa).

Residues Met-1 to Asn-21 show a composition bias toward basic residues. 2 disordered regions span residues Met-1–Pro-23 and Gln-57–Asp-76. Positions Lys-10–Lys-78 form a coiled coil. Residue Lys-78 forms a Glycyl lysine isopeptide (Lys-Gly) (interchain with G-Cter in SUMO2) linkage. Basic residues predominate over residues Arg-104–Ala-124. The disordered stretch occupies residues Arg-104–Trp-130.

Belongs to the learning-associated protein family. Interacts with CTCF, MYO1C and with the transcriptional machinery, including RNA polymerase II and TBP. Widely expressed, with high levels in testis and spleen and low levels in heart. In the brain, expressed in the cortex and hippocampus, and at very low levels in the cerebellum.

It is found in the nucleus. It localises to the nucleolus. Its subcellular location is the chromosome. In terms of biological role, in hippocampal neurons, regulates dendritic and spine growth and synaptic transmission. This Mus musculus (Mouse) protein is Protein LLP homolog (Llph).